Here is a 427-residue protein sequence, read N- to C-terminus: Enolase (427 aa).

Gln164 is a (2R)-2-phosphoglycerate binding site. Glu206 serves as the catalytic Proton donor. 3 residues coordinate Mg(2+): Asp243, Glu284, and Asp311. 4 residues coordinate (2R)-2-phosphoglycerate: Lys336, Arg365, Ser366, and Lys387. Lys336 acts as the Proton acceptor in catalysis.

Belongs to the enolase family. Mg(2+) serves as cofactor.

It is found in the cytoplasm. The protein localises to the secreted. Its subcellular location is the cell surface. The catalysed reaction is (2R)-2-phosphoglycerate = phosphoenolpyruvate + H2O. It functions in the pathway carbohydrate degradation; glycolysis; pyruvate from D-glyceraldehyde 3-phosphate: step 4/5. Its function is as follows. Catalyzes the reversible conversion of 2-phosphoglycerate (2-PG) into phosphoenolpyruvate (PEP). It is essential for the degradation of carbohydrates via glycolysis. This is Enolase from Synechococcus sp. (strain JA-2-3B'a(2-13)) (Cyanobacteria bacterium Yellowstone B-Prime).